Here is a 240-residue protein sequence, read N- to C-terminus: Uridylate kinase (240 aa).

13–16 (KLSG) lines the ATP pocket. Residues 21–26 (GEQGYG) form an involved in allosteric activation by GTP region. Gly-55 contacts UMP. ATP-binding residues include Gly-56 and Arg-60. UMP contacts are provided by residues Asp-75 and 137-144 (TGNPFFST). ATP contacts are provided by Thr-164, Tyr-170, and Asp-173.

The protein belongs to the UMP kinase family. In terms of assembly, homohexamer.

Its subcellular location is the cytoplasm. It carries out the reaction UMP + ATP = UDP + ADP. Its pathway is pyrimidine metabolism; CTP biosynthesis via de novo pathway; UDP from UMP (UMPK route): step 1/1. Allosterically activated by GTP. Inhibited by UTP. Catalyzes the reversible phosphorylation of UMP to UDP. In Aquifex aeolicus (strain VF5), this protein is Uridylate kinase.